A 181-amino-acid chain; its full sequence is MTMEMHATTIFAVQHQGQSAMCGDGQVTLGNSVVMKHKAKKVRTLYNGKVLAGFAGSVADAFTLFEKFETKLQSFNGNLTRASVELAQEWRSDKVLRKLEAMLIVMNKEHMYLVSGTGEVIEPDDGILAIGSGGNYALSAGRALVRYADNMSAADIARSALEVAGEICVFTNDQITLEVLE.

Threonine 8 is a catalytic residue. Na(+)-binding residues include glycine 165, cysteine 168, and threonine 171.

The protein belongs to the peptidase T1B family. HslV subfamily. In terms of assembly, a double ring-shaped homohexamer of HslV is capped on each side by a ring-shaped HslU homohexamer. The assembly of the HslU/HslV complex is dependent on binding of ATP.

Its subcellular location is the cytoplasm. The enzyme catalyses ATP-dependent cleavage of peptide bonds with broad specificity.. Allosterically activated by HslU binding. Its function is as follows. Protease subunit of a proteasome-like degradation complex believed to be a general protein degrading machinery. This is ATP-dependent protease subunit HslV from Oceanobacillus iheyensis (strain DSM 14371 / CIP 107618 / JCM 11309 / KCTC 3954 / HTE831).